Reading from the N-terminus, the 90-residue chain is uncharacterized protein (90 aa).

3 helical membrane-spanning segments follow: residues 5-27 (FDILTLILTAIYLLIGGGFIIYI), 40-62 (IYLSIGFFLLIIGASLPVLTFVA), and 67-89 (MSVVVVAILMQIAGLSSIFYSIV).

It localises to the cell membrane. This is an uncharacterized protein from Archaeoglobus fulgidus (strain ATCC 49558 / DSM 4304 / JCM 9628 / NBRC 100126 / VC-16).